A 252-amino-acid polypeptide reads, in one-letter code: Serine/threonine phosphatase stp (252 aa).

Residues 1-18 (MHAEFRTDRGRIRHHNED) are compositionally biased toward basic and acidic residues. The segment at 1–23 (MHAEFRTDRGRIRHHNEDNGGVF) is disordered. One can recognise a PPM-type phosphatase domain in the interval 2–242 (HAEFRTDRGR…DNITVLLVER (241 aa)). Asp-36, Gly-37, Asp-194, and Asp-233 together coordinate Mn(2+).

It belongs to the PP2C family. Mn(2+) serves as cofactor.

The protein localises to the cytoplasm. Its subcellular location is the membrane. The enzyme catalyses O-phospho-L-seryl-[protein] + H2O = L-seryl-[protein] + phosphate. It carries out the reaction O-phospho-L-threonyl-[protein] + H2O = L-threonyl-[protein] + phosphate. Protein phosphatase that dephosphorylates EF-Tu. This is Serine/threonine phosphatase stp (stp) from Listeria monocytogenes serotype 4b (strain F2365).